The sequence spans 395 residues: F-box/LRR-repeat protein 12 (395 aa).

In terms of domain architecture, F-box spans threonine 13–cysteine 61. 10 LRR repeats span residues asparagine 75–glycine 100, cysteine 101–cysteine 126, cysteine 127–arginine 152, asparagine 154–tyrosine 177, cysteine 178–asparagine 203, serine 226–glycine 250, serine 252–methionine 278, cysteine 279–leucine 304, cysteine 305–arginine 330, and cysteine 331–glycine 356.

The protein is F-box/LRR-repeat protein 12 (FBL12) of Arabidopsis thaliana (Mouse-ear cress).